A 336-amino-acid polypeptide reads, in one-letter code: UPF0324 membrane protein PM1461 (336 aa).

The next 10 helical transmembrane spans lie at 5–23 (TLFLGLVFIGILTFLVNLL), 30–52 (LNANLSALTIAILLGILFGNTFY), 62–84 (GVIFAKGTLLRLGIILYGFRLTL), 91–113 (GINAIATDTIMLISTFLLTLWLG), 123–140 (IVYLTAGGCSICGAAAIM), 153–175 (VSIAVAVIVIFGTISMFLYPLMY), 221–238 (MIRVMMLAPFLLLVSWLL), 250–271 (ISIPWFAFLFILMAVINSFSLI), 275–297 (IVAWIVEIDSLLLIAAMTALGLT), and 310–332 (PLILGALVLCWLVIGGFFVNVGI).

This sequence belongs to the UPF0324 family.

It localises to the cell membrane. The sequence is that of UPF0324 membrane protein PM1461 from Pasteurella multocida (strain Pm70).